The chain runs to 143 residues: Sporulation-specific cell division protein SsgB (143 aa).

This sequence belongs to the SsgA family. In terms of assembly, interacts with SsgA. Interacts with FtsZ (via N-terminus).

Its subcellular location is the cell septum. Involved in sporulation-specific cell division. Required for early stages of sporulation. Important in the process of growth cessation prior to sporulation-specific cell division. Recruits cell division protein FtsZ to the future septum sites and tethers the contractile ring structure (Z ring) to the cytoplasmic membrane during sporulation. Stimulates polymerization and filament length of FtsZ in vitro. This Frankia casuarinae (strain DSM 45818 / CECT 9043 / HFP020203 / CcI3) protein is Sporulation-specific cell division protein SsgB.